Here is a 168-residue protein sequence, read N- to C-terminus: MKLLKALAVLSLATISSHSFAVDGFQNVKFGASKTEVRNAYQKCQWQKDEYDLFCPNFTLGAIKDTGAYFYFIDDKFERIAINIPNVNIDGIGQALSEKYTLSSQPTQRELANPKPNNVYDFGFDKDTILIRYTYDNDMTEEIFLIYTTPDFNNKLQTKDAQSVKDQL.

Positions 1–21 form a signal peptide, or 19; it reads MKLLKALAVLSLATISSHSFA.

This is an uncharacterized protein from Haemophilus influenzae (strain ATCC 51907 / DSM 11121 / KW20 / Rd).